Consider the following 162-residue polypeptide: Regulator of sigma D (162 aa).

Belongs to the Rsd/AlgQ family. In terms of assembly, interacts with RpoD.

It is found in the cytoplasm. Functionally, binds RpoD and negatively regulates RpoD-mediated transcription activation by preventing the interaction between the primary sigma factor RpoD with the catalytic core of the RNA polymerase and with promoter DNA. May be involved in replacement of the RNA polymerase sigma subunit from RpoD to RpoS during the transition from exponential growth to the stationary phase. This chain is Regulator of sigma D, found in Salmonella paratyphi A (strain ATCC 9150 / SARB42).